We begin with the raw amino-acid sequence, 490 residues long: UDP-glycosyltransferase 84A1 (490 aa).

His30 functions as the Proton acceptor in the catalytic mechanism. His30 is an an anthocyanidin binding site. The UDP-alpha-D-glucose site is built by Gln358, His373, Trp376, Asn377, Ser378, and Glu381. Gly396 is an an anthocyanidin binding site. Positions 397 and 398 each coordinate UDP-alpha-D-glucose.

It belongs to the UDP-glycosyltransferase family. As to expression, expressed in roots, flowers and siliques.

It carries out the reaction (E)-4-coumarate + UDP-alpha-D-glucose = 4-O-(beta-D-glucosyl)-trans-4-coumarate + UDP + H(+). The catalysed reaction is (E)-ferulate + UDP-alpha-D-glucose = 1-O-[(E)-feruloyl]-beta-D-glucose + UDP. The enzyme catalyses (E)-caffeate + UDP-alpha-D-glucose = 1-O-[(E)-caffeoyl]-beta-D-glucose + UDP. It catalyses the reaction (E)-sinapate + UDP-alpha-D-glucose = 1-O-(trans-sinapoyl)-beta-D-glucose + UDP. It carries out the reaction (E)-cinnamate + UDP-alpha-D-glucose = 1-O-(trans-cinnamoyl)-beta-D-glucose + UDP. In terms of biological role, UDP-glucosyltransferase that forms glucose esters with phenylpropanoids. Glucosylates 4-coumarate, ferulate, caffeate, sinapate and cinnamate. Can glucosylate the phytotoxic xenobiotic compound 2,4,5-trichlorophenol (TCP). The polypeptide is UDP-glycosyltransferase 84A1 (Arabidopsis thaliana (Mouse-ear cress)).